Consider the following 426-residue polypeptide: Glutamate-1-semialdehyde 2,1-aminomutase (426 aa).

The residue at position 265 (Lys265) is an N6-(pyridoxal phosphate)lysine.

Belongs to the class-III pyridoxal-phosphate-dependent aminotransferase family. HemL subfamily. Homodimer. Pyridoxal 5'-phosphate serves as cofactor.

Its subcellular location is the cytoplasm. It carries out the reaction (S)-4-amino-5-oxopentanoate = 5-aminolevulinate. It participates in porphyrin-containing compound metabolism; protoporphyrin-IX biosynthesis; 5-aminolevulinate from L-glutamyl-tRNA(Glu): step 2/2. The sequence is that of Glutamate-1-semialdehyde 2,1-aminomutase from Cellvibrio japonicus (strain Ueda107) (Pseudomonas fluorescens subsp. cellulosa).